The chain runs to 192 residues: Nucleoside triphosphate pyrophosphatase (192 aa).

Aspartate 73 functions as the Proton acceptor in the catalytic mechanism.

Belongs to the Maf family. A divalent metal cation is required as a cofactor.

Its subcellular location is the cytoplasm. The catalysed reaction is a ribonucleoside 5'-triphosphate + H2O = a ribonucleoside 5'-phosphate + diphosphate + H(+). The enzyme catalyses a 2'-deoxyribonucleoside 5'-triphosphate + H2O = a 2'-deoxyribonucleoside 5'-phosphate + diphosphate + H(+). Its function is as follows. Nucleoside triphosphate pyrophosphatase. May have a dual role in cell division arrest and in preventing the incorporation of modified nucleotides into cellular nucleic acids. The sequence is that of Nucleoside triphosphate pyrophosphatase from Ehrlichia chaffeensis (strain ATCC CRL-10679 / Arkansas).